Consider the following 404-residue polypeptide: tRNA/tmRNA (uracil-C(5))-methyltransferase (404 aa).

5 residues coordinate S-adenosyl-L-methionine: Q218, Y251, N256, E272, and D332. The active-site Nucleophile is C358. Residue E392 is the Proton acceptor of the active site.

It belongs to the class I-like SAM-binding methyltransferase superfamily. RNA M5U methyltransferase family. TrmA subfamily.

It carries out the reaction uridine(54) in tRNA + S-adenosyl-L-methionine = 5-methyluridine(54) in tRNA + S-adenosyl-L-homocysteine + H(+). It catalyses the reaction uridine(341) in tmRNA + S-adenosyl-L-methionine = 5-methyluridine(341) in tmRNA + S-adenosyl-L-homocysteine + H(+). Its function is as follows. Dual-specificity methyltransferase that catalyzes the formation of 5-methyluridine at position 54 (m5U54) in all tRNAs, and that of position 341 (m5U341) in tmRNA (transfer-mRNA). This Helicobacter hepaticus (strain ATCC 51449 / 3B1) protein is tRNA/tmRNA (uracil-C(5))-methyltransferase.